The primary structure comprises 156 residues: Isotocin-neurophysin IT 2 (156 aa).

The signal sequence occupies residues M1–A19. C20 and C25 are disulfide-bonded. A Glycine amide modification is found at G28. 7 disulfides stabilise this stretch: C41/C85, C44/C58, C52/C75, C59/C65, C92/C105, C99/C117, and C106/C111.

The protein belongs to the vasopressin/oxytocin family. Post-translationally, seven disulfide bonds are present in neurophysin.

It localises to the secreted. In terms of biological role, isotocin causes contraction of smooth muscles. The protein is Isotocin-neurophysin IT 2 of Oncorhynchus keta (Chum salmon).